The following is a 393-amino-acid chain: S-adenosylmethionine synthase (393 aa).

Histidine 16 contributes to the ATP binding site. Mg(2+) is bound at residue aspartate 18. Glutamate 44 is a binding site for K(+). Residues glutamate 57 and glutamine 100 each coordinate L-methionine. The flexible loop stretch occupies residues 100–110 (QSNDIAQGVDH). ATP contacts are provided by residues 167–169 (DAK), 238–239 (RF), aspartate 247, 253–254 (RK), alanine 270, and lysine 274. Residue aspartate 247 participates in L-methionine binding. Residue lysine 278 coordinates L-methionine.

It belongs to the AdoMet synthase family. Homotetramer; dimer of dimers. The cofactor is Mg(2+). Requires K(+) as cofactor.

It is found in the cytoplasm. It catalyses the reaction L-methionine + ATP + H2O = S-adenosyl-L-methionine + phosphate + diphosphate. It participates in amino-acid biosynthesis; S-adenosyl-L-methionine biosynthesis; S-adenosyl-L-methionine from L-methionine: step 1/1. Its function is as follows. Catalyzes the formation of S-adenosylmethionine (AdoMet) from methionine and ATP. The overall synthetic reaction is composed of two sequential steps, AdoMet formation and the subsequent tripolyphosphate hydrolysis which occurs prior to release of AdoMet from the enzyme. The protein is S-adenosylmethionine synthase of Polaromonas sp. (strain JS666 / ATCC BAA-500).